The chain runs to 542 residues: CTP synthase (542 aa).

The interval 1-265 is amidoligase domain; sequence MARYVFITGG…DSEVLSAFGI (265 aa). S13 provides a ligand contact to CTP. S13 contacts UTP. An ATP-binding site is contributed by 14 to 19; sequence SLGKGI. Y54 contacts L-glutamine. D71 contributes to the ATP binding site. The Mg(2+) site is built by D71 and E139. CTP is bound by residues 146–148, 186–191, and K222; these read DIE and KTKPTQ. UTP-binding positions include 186–191 and K222; that span reads KTKPTQ. Residues 291–541 enclose the Glutamine amidotransferase type-1 domain; the sequence is TIAVVGKYTG…IEAAIEQSRL (251 aa). Position 353 (G353) interacts with L-glutamine. C380 serves as the catalytic Nucleophile; for glutamine hydrolysis. L-glutamine-binding positions include 381-384, E404, and R469; that span reads FGMQ. Catalysis depends on residues H514 and E516.

It belongs to the CTP synthase family. Homotetramer.

The enzyme catalyses UTP + L-glutamine + ATP + H2O = CTP + L-glutamate + ADP + phosphate + 2 H(+). It catalyses the reaction L-glutamine + H2O = L-glutamate + NH4(+). The catalysed reaction is UTP + NH4(+) + ATP = CTP + ADP + phosphate + 2 H(+). It participates in pyrimidine metabolism; CTP biosynthesis via de novo pathway; CTP from UDP: step 2/2. With respect to regulation, allosterically activated by GTP, when glutamine is the substrate; GTP has no effect on the reaction when ammonia is the substrate. The allosteric effector GTP functions by stabilizing the protein conformation that binds the tetrahedral intermediate(s) formed during glutamine hydrolysis. Inhibited by the product CTP, via allosteric rather than competitive inhibition. In terms of biological role, catalyzes the ATP-dependent amination of UTP to CTP with either L-glutamine or ammonia as the source of nitrogen. Regulates intracellular CTP levels through interactions with the four ribonucleotide triphosphates. The sequence is that of CTP synthase from Brucella melitensis biotype 1 (strain ATCC 23456 / CCUG 17765 / NCTC 10094 / 16M).